The chain runs to 157 residues: DNA gyrase inhibitor (157 aa).

The protein belongs to the DNA gyrase inhibitor family. In terms of assembly, interacts with DNA gyrase.

It is found in the cytoplasm. In terms of biological role, inhibits the supercoiling activity of DNA gyrase. Acts by inhibiting DNA gyrase at an early step, prior to (or at the step of) binding of DNA by the gyrase. It protects cells against toxins that target DNA gyrase, by inhibiting activity of these toxins and reducing the formation of lethal double-strand breaks in the cell. This is DNA gyrase inhibitor from Enterobacter lignolyticus (strain SCF1).